The chain runs to 117 residues: uncharacterized protein (117 aa).

A signal peptide spans 1-23; that stretch reads MVSEAEFMAALAKFAETSATASA.

This is an uncharacterized protein from Archaeoglobus fulgidus (strain ATCC 49558 / DSM 4304 / JCM 9628 / NBRC 100126 / VC-16).